The chain runs to 58 residues: UPF0391 membrane protein COXBURSA331_A2131 (58 aa).

2 helical membrane-spanning segments follow: residues 3-23 and 30-50; these read FWVLIFFIIAVIAALFGFTGI and IAKILFFIFLVLFVISLIAML.

It belongs to the UPF0391 family.

It is found in the cell membrane. This is UPF0391 membrane protein COXBURSA331_A2131 from Coxiella burnetii (strain RSA 331 / Henzerling II).